Reading from the N-terminus, the 244-residue chain is WUSCHEL-related homeobox 3 (244 aa).

Positions 4 to 68 (VASTRWCPTP…NHKARDRQKL (65 aa)) form a DNA-binding region, homeobox; WUS-type.

The protein belongs to the WUS homeobox family. Expressed in aerial parts of seedlings, inflorescences and flowers at low level. Expressed in a restricted number of L1 cells at the lateral regions of flower primordia.

The protein localises to the nucleus. Probable transcription factor required to initiate organ founder cells in a lateral domain of shoot meristems. Involved in the lateral sepal axis-dependent development of flowers, probably by regulating the proliferation of L1 cells at the lateral region of flower primordia. Required for the formation of the margin cells of the first and second whorl organs. This is WUSCHEL-related homeobox 3 (WOX3) from Arabidopsis thaliana (Mouse-ear cress).